A 312-amino-acid chain; its full sequence is tRNA dimethylallyltransferase (312 aa).

Position 13–20 (13–20 (GPTAAGKT)) interacts with ATP. Position 15-20 (15-20 (TAAGKT)) interacts with substrate. Interaction with substrate tRNA stretches follow at residues 38 to 41 (DSAM), 162 to 166 (QRLLR), and 244 to 249 (RCVGYR).

This sequence belongs to the IPP transferase family. As to quaternary structure, monomer. It depends on Mg(2+) as a cofactor.

The catalysed reaction is adenosine(37) in tRNA + dimethylallyl diphosphate = N(6)-dimethylallyladenosine(37) in tRNA + diphosphate. In terms of biological role, catalyzes the transfer of a dimethylallyl group onto the adenine at position 37 in tRNAs that read codons beginning with uridine, leading to the formation of N6-(dimethylallyl)adenosine (i(6)A). This Chromohalobacter salexigens (strain ATCC BAA-138 / DSM 3043 / CIP 106854 / NCIMB 13768 / 1H11) protein is tRNA dimethylallyltransferase.